Reading from the N-terminus, the 112-residue chain is MGYTIQLDKDGDYCWDEDPTHHDPYMQANTTSHTAVSRAAMAAPHVAAHHAFHEPFIKLNLTDKNIFNGLGFILIVIFIYLLLITLQQMLTRHIYNTVQHCVKAHLDSKNLQ.

N-linked (GlcNAc...) asparagine; by host glycosylation is found at N29 and N60. Residues I66–L86 traverse the membrane as a helical segment.

Belongs to the asfivirus B117L family.

Its subcellular location is the host membrane. The protein localises to the virion. This is an uncharacterized protein from Ornithodoros (relapsing fever ticks).